We begin with the raw amino-acid sequence, 68 residues long: ATP synthase F(0) complex subunit 8 (68 aa).

Residues 8–24 form a helical membrane-spanning segment; that stretch reads TWSITIVSMIITLFIMF. N6-acetyllysine; alternate is present on lysine 54. Lysine 54 bears the N6-succinyllysine; alternate mark. At lysine 57 the chain carries N6-acetyllysine.

It belongs to the ATPase protein 8 family. Component of the ATP synthase complex composed at least of ATP5F1A/subunit alpha, ATP5F1B/subunit beta, ATP5MC1/subunit c (homooctomer), MT-ATP6/subunit a, MT-ATP8/subunit 8, ATP5ME/subunit e, ATP5MF/subunit f, ATP5MG/subunit g, ATP5MK/subunit k, ATP5MJ/subunit j, ATP5F1C/subunit gamma, ATP5F1D/subunit delta, ATP5F1E/subunit epsilon, ATP5PF/subunit F6, ATP5PB/subunit b, ATP5PD/subunit d, ATP5PO/subunit OSCP. ATP synthase complex consists of a soluble F(1) head domain (subunits alpha(3) and beta(3)) - the catalytic core - and a membrane F(0) domain - the membrane proton channel (subunits c, a, 8, e, f, g, k and j). These two domains are linked by a central stalk (subunits gamma, delta, and epsilon) rotating inside the F1 region and a stationary peripheral stalk (subunits F6, b, d, and OSCP). Interacts with PRICKLE3.

The protein localises to the mitochondrion membrane. In terms of biological role, subunit 8, of the mitochondrial membrane ATP synthase complex (F(1)F(0) ATP synthase or Complex V) that produces ATP from ADP in the presence of a proton gradient across the membrane which is generated by electron transport complexes of the respiratory chain. ATP synthase complex consist of a soluble F(1) head domain - the catalytic core - and a membrane F(1) domain - the membrane proton channel. These two domains are linked by a central stalk rotating inside the F(1) region and a stationary peripheral stalk. During catalysis, ATP synthesis in the catalytic domain of F(1) is coupled via a rotary mechanism of the central stalk subunits to proton translocation. In vivo, can only synthesize ATP although its ATP hydrolase activity can be activated artificially in vitro. Part of the complex F(0) domain. The polypeptide is ATP synthase F(0) complex subunit 8 (Ceratotherium simum (White rhinoceros)).